A 348-amino-acid chain; its full sequence is Ninja-family protein AFP2 (348 aa).

A disordered region spans residues 186–272 (DSDGGGATGG…VDRKGKGMAT (87 aa)). Gly residues predominate over residues 187 to 197 (SDGGGATGGGS). Composition is skewed to polar residues over residues 207–216 (KNQQGSSNSC) and 228–244 (CSSN…SVTR). A compositionally biased stretch (basic and acidic residues) spans 247-267 (KVNENENEKRVRSEDSVDRKG).

The protein belongs to the Ninja family. Forms a homodimer and heterodimer with AFP1 and AFP3. Interacts with ABI5/DPBF1, DPBF2, AREB3/DPBF3, EEL/DPBF4, ABF1, ABF3/DPBF5 and ABF4/AREB2.

It is found in the nucleus. Functionally, acts as a negative regulator of abscisic acid (ABA) response during germination through the ubiquitin-mediated proteolysis of ABI5/DPBF1. This is Ninja-family protein AFP2 (AFP2) from Arabidopsis thaliana (Mouse-ear cress).